Here is a 137-residue protein sequence, read N- to C-terminus: Acetyltransferase Atu2258 (137 aa).

One can recognise an N-acetyltransferase domain in the interval 1–137; that stretch reads MNFVLSDVAD…QSITWLEKRF (137 aa). Residues 66-68, Gly-74, and 108-110 each bind CoA; these read LFV and RTY.

Its function is as follows. Catalyzes the transfer of an acetyl group from acetyl coenzyme A (AcCoA) to an acceptor substrate and releases both CoA and the acetylated product. It prefers glucosamine 6-phosphate or dopamine. It can also use the thialysine, N(8)-acetylspermidine, chloramphenicol, puromycin, polymyxin B, and 4-aminobutyrate ethyl ester. The protein is Acetyltransferase Atu2258 of Agrobacterium fabrum (strain C58 / ATCC 33970) (Agrobacterium tumefaciens (strain C58)).